A 475-amino-acid chain; its full sequence is Aspartyl/glutamyl-tRNA(Asn/Gln) amidotransferase subunit B (475 aa).

Belongs to the GatB/GatE family. GatB subfamily. Heterotrimer of A, B and C subunits.

It carries out the reaction L-glutamyl-tRNA(Gln) + L-glutamine + ATP + H2O = L-glutaminyl-tRNA(Gln) + L-glutamate + ADP + phosphate + H(+). The enzyme catalyses L-aspartyl-tRNA(Asn) + L-glutamine + ATP + H2O = L-asparaginyl-tRNA(Asn) + L-glutamate + ADP + phosphate + 2 H(+). Functionally, allows the formation of correctly charged Asn-tRNA(Asn) or Gln-tRNA(Gln) through the transamidation of misacylated Asp-tRNA(Asn) or Glu-tRNA(Gln) in organisms which lack either or both of asparaginyl-tRNA or glutaminyl-tRNA synthetases. The reaction takes place in the presence of glutamine and ATP through an activated phospho-Asp-tRNA(Asn) or phospho-Glu-tRNA(Gln). The chain is Aspartyl/glutamyl-tRNA(Asn/Gln) amidotransferase subunit B from Helicobacter pylori (strain HPAG1).